Consider the following 76-residue polypeptide: UPF0291 protein BPUM_1689 (76 aa).

Disordered regions lie at residues 1-31 (MISKNQLARINELSKKSKETGLSDAEKTEQK) and 56-76 (DPEGNDVTPEKLKRERDQNLH). Basic and acidic residues-rich tracts occupy residues 12–31 (ELSKKSKETGLSDAEKTEQK) and 63–76 (TPEKLKRERDQNLH).

The protein belongs to the UPF0291 family.

The protein resides in the cytoplasm. The protein is UPF0291 protein BPUM_1689 of Bacillus pumilus (strain SAFR-032).